Consider the following 301-residue polypeptide: MLLDTASLYFRAYFGVPDSVKAPDGTPVNAVRGLLDFIDRLVKDHRPEHLVACMDADWRPHWRVELIPSYKAHRVAEERPAGPDAEEVPDTLSPQVPVIEAVLDALGIARVGVAGYEADDVIGTYTARATGPVDIVTGDRDLYQLVDDARGVRVLYPVKGVGTLNLVDEAALREKYGVDGAGYADLALLRGDPSDGLPGVPGIGEKTAAKLLAEFGDLAGIQAAVDDPKARLTPTQRKRLTEAGPYLAVAPKVVRVAADVPLPDTGTALPHGPRDAAALEALAARWGLGGSLQRLLTTLTA.

Positions 182-264 (GYADLALLRG…RVAADVPLPD (83 aa)) constitute a 5'-3' exonuclease domain.

5'-3' exonuclease acting preferentially on double-stranded DNA. This chain is 5'-3' exonuclease, found in Streptomyces coelicolor (strain ATCC BAA-471 / A3(2) / M145).